A 149-amino-acid chain; its full sequence is UPF0310 protein SSO2595 (149 aa).

It belongs to the UPF0310 family.

The protein is UPF0310 protein SSO2595 of Saccharolobus solfataricus (strain ATCC 35092 / DSM 1617 / JCM 11322 / P2) (Sulfolobus solfataricus).